A 246-amino-acid polypeptide reads, in one-letter code: Ribonuclease 3 (246 aa).

One can recognise an RNase III domain in the interval 20-145 (FSKLEKILGF…FVGAIYLDRG (126 aa)). Glutamate 62 serves as a coordination point for Mg(2+). Residue aspartate 66 is part of the active site. 2 residues coordinate Mg(2+): asparagine 131 and glutamate 134. Residue glutamate 134 is part of the active site. Residues 173–241 (SYKSLLIEWC…SKRGYFVFQS (69 aa)) enclose the DRBM domain.

This sequence belongs to the ribonuclease III family. As to quaternary structure, homodimer. Requires Mg(2+) as cofactor.

It localises to the cytoplasm. It carries out the reaction Endonucleolytic cleavage to 5'-phosphomonoester.. Functionally, digests double-stranded RNA. Involved in the processing of primary rRNA transcript to yield the immediate precursors to the large and small rRNAs (23S and 16S). Processes some mRNAs, and tRNAs when they are encoded in the rRNA operon. Processes pre-crRNA and tracrRNA of type II CRISPR loci if present in the organism. This chain is Ribonuclease 3, found in Flavobacterium psychrophilum (strain ATCC 49511 / DSM 21280 / CIP 103535 / JIP02/86).